A 318-amino-acid chain; its full sequence is Protein FAM228A (318 aa).

Residues 259–297 (SQESKRHEKKGLALGTGQHRPRSWAAGEGQQRRRSQPVD) are disordered.

The protein belongs to the FAM228 family.

This chain is Protein FAM228A (FAM228A), found in Bos taurus (Bovine).